Here is a 388-residue protein sequence, read N- to C-terminus: Palmitoyltransferase ZDHHC18-B (388 aa).

The segment at 1-33 is disordered; sequence MKNREYQQIDPQALATPTPTPPPRSLPEHKPRR. The Cytoplasmic portion of the chain corresponds to 1–58; sequence MKNREYQQIDPQALATPTPTPPPRSLPEHKPRRARRKWEVFPGKNRFYCDGRIIVARQ. Residues 59–79 traverse the membrane as a helical segment; the sequence is SGVLPLTLGLILLTSGLFFIF. The Lumenal segment spans residues 80-87; that stretch reads DCPFLVKH. A helical membrane pass occupies residues 88–108; the sequence is LTSCIPAIGGVLFVFVIISLL. Residues 109–205 are Cytoplasmic-facing; sequence QTSFTDPGIL…GNCVGKRNYR (97 aa). Residues 162-212 enclose the DHHC domain; sequence KYCFTCKIFRPPRTSHCSLCDNCVERFDHHCPWVGNCVGKRNYRFFYTFIV. The S-palmitoyl cysteine intermediate role is filled by Cys192. The chain crosses the membrane as a helical span at residues 206–226; that stretch reads FFYTFIVSLSFLTAFIFGCVT. Over 227-253 the chain is Lumenal; that stretch reads THLALRSQGGNGLVNALQSSPASALEL. Residues 254-274 traverse the membrane as a helical segment; it reads VVCFFSVWSILGLSGFHTYLV. The Cytoplasmic portion of the chain corresponds to 275–388; it reads AANLTTNEDI…AISMQNHSTA (114 aa).

This sequence belongs to the DHHC palmitoyltransferase family. ERF2/ZDHHC9 subfamily.

It is found in the golgi apparatus membrane. It catalyses the reaction L-cysteinyl-[protein] + hexadecanoyl-CoA = S-hexadecanoyl-L-cysteinyl-[protein] + CoA. Functionally, palmitoyltransferase that catalyzes the addition of palmitate onto various protein substrates, such as CGAS, HRAS and LCK. The polypeptide is Palmitoyltransferase ZDHHC18-B (Danio rerio (Zebrafish)).